A 212-amino-acid chain; its full sequence is Inactive ribonuclease-like protein 10 (212 aa).

The signal sequence occupies residues 1-24 (MKLTLVQIFFMMLLLLLGLGVGLG).

Belongs to the pancreatic ribonuclease family. The N-terminus is blocked. Glycosylated. As to expression, male-specific expression in proximal caput of the epididymis.

It is found in the secreted. Its function is as follows. Secreted proximal epididymal protein required for post-testicular sperm maturation and male fertility. May be involved in sperm adhesion to the egg zona pellucida. Does not have ribonuclease activity. The polypeptide is Inactive ribonuclease-like protein 10 (RNASE10) (Ovis aries (Sheep)).